The chain runs to 290 residues: Carbonic anhydrase-related protein (290 aa).

S5 bears the Phosphoserine mark. The 263-residue stretch at 27 to 289 (VEWGYEEGVE…LSDRVIRAAF (263 aa)) folds into the Alpha-carbonic anhydrase domain. H87 (proton donor/acceptor) is an active-site residue. Zn(2+) contacts are provided by H118 and H141.

The protein belongs to the alpha-carbonic anhydrase family.

Its function is as follows. Does not have a carbonic anhydrase catalytic activity. The polypeptide is Carbonic anhydrase-related protein (Ca8) (Rattus norvegicus (Rat)).